The following is a 444-amino-acid chain: Acyl-CoA 6-desaturase (444 aa).

The Cytoplasmic segment spans residues 1–131; it reads MGKGGNQGEG…DMNLFKTNHV (131 aa). A Cytochrome b5 heme-binding domain is found at 18-95; that stretch reads MPTFSWEEIQ…LKPLLIGELA (78 aa). The helical transmembrane segment at 132–152 threads the bilayer; it reads FFLLLLAHIIALESIAWFTVF. At 153-157 the chain is on the lumenal side; the sequence is YFGNG. The chain crosses the membrane as a helical span at residues 158-178; sequence WIPTLITAFVLATSQAQAGWL. Residues 179 to 264 are Cytoplasmic-facing; the sequence is QHDYGHLSVY…KYLPYNHQHE (86 aa). The short motif at 180 to 184 is the Histidine box-1 element; sequence HDYGH. The Histidine box-2 motif lies at 217–221; sequence HFQHH. Residues 265-285 form a helical membrane-spanning segment; it reads YFFLIGPPLLIPMYFQYQIIM. Topologically, residues 286-305 are lumenal; it reads TMIVHKNWVDLAWAISYYIR. A helical membrane pass occupies residues 306–326; that stretch reads FFVTYIPFYGILGALLFLNFI. The Cytoplasmic segment spans residues 327 to 444; that stretch reads RFLESHWFVW…KLWLDAYLHK (118 aa). The short motif at 382-386 is the Histidine box-3 element; sequence QIEHH.

It belongs to the fatty acid desaturase type 1 family.

Its subcellular location is the endoplasmic reticulum membrane. It catalyses the reaction (9Z,12Z)-octadecadienoyl-CoA + 2 Fe(II)-[cytochrome b5] + O2 + 2 H(+) = (6Z,9Z,12Z)-octadecatrienoyl-CoA + 2 Fe(III)-[cytochrome b5] + 2 H2O. It carries out the reaction (9Z,12Z,15Z)-octadecatrienoyl-CoA + 2 Fe(II)-[cytochrome b5] + O2 + 2 H(+) = (6Z,9Z,12Z,15Z)-octadecatetraenoyl-CoA + 2 Fe(III)-[cytochrome b5] + 2 H2O. The catalysed reaction is (9Z,12Z,15Z,18Z,21Z)-tetracosapentaenoyl-CoA + 2 Fe(II)-[cytochrome b5] + O2 + 2 H(+) = (6Z,9Z,12Z,15Z,18Z,21Z)-tetracosahexaenoyl-CoA + 2 Fe(III)-[cytochrome b5] + 2 H2O. The enzyme catalyses (11E)-octadecenoyl-CoA + 2 Fe(II)-[cytochrome b5] + O2 + 2 H(+) = (6Z,11E)-octadecadienoyl-CoA + 2 Fe(III)-[cytochrome b5] + 2 H2O. It catalyses the reaction (11Z,14Z)-eicosadienoyl-CoA + 2 Fe(II)-[cytochrome b5] + O2 + 2 H(+) = (8Z,11Z,14Z)-eicosatrienoyl-CoA + 2 Fe(III)-[cytochrome b5] + 2 H2O. It carries out the reaction (11Z,14Z,17Z)-eicosatrienoyl-CoA + 2 Fe(II)-[cytochrome b5] + O2 + 2 H(+) = (8Z,11Z,14Z,17Z)-eicosatetraenoyl-CoA + 2 Fe(III)-[cytochrome b5] + 2 H2O. It participates in lipid metabolism; polyunsaturated fatty acid biosynthesis. In terms of biological role, involved in the biosynthesis of highly unsaturated fatty acids (HUFA) from the essential polyunsaturated fatty acids (PUFA) linoleic acid (LA) (18:2n-6) and alpha-linolenic acid (ALA) (18:3n-3) precursors, acting as a fatty acyl-coenzyme A (CoA) desaturase that introduces a cis double bond at carbon 6 of the fatty acyl chain. Catalyzes the first and rate limiting step in this pathway which is the desaturation of LA (18:2n-6) and ALA (18:3n-3) into gamma-linoleate (GLA) (18:3n-6) and stearidonate (18:4n-3), respectively. Subsequently, in the biosynthetic pathway of HUFA n-3 series, it desaturates tetracosapentaenoate (24:5n-3) to tetracosahexaenoate (24:6n-3), which is then converted to docosahexaenoate (DHA)(22:6n-3), an important lipid for nervous system function. It can also desaturate (11E)-octadecenoate (trans-vaccenoate) at carbon 6 generating (6Z,11E)-octadecadienoate. In addition to Delta-6 activity, this enzyme exhibits Delta-8 activity with slight biases toward n-3 fatty acyl-CoA substrates. In Macaca fascicularis (Crab-eating macaque), this protein is Acyl-CoA 6-desaturase (FADS2).